A 175-amino-acid polypeptide reads, in one-letter code: Large ribosomal subunit protein uL10 (175 aa).

It belongs to the universal ribosomal protein uL10 family. As to quaternary structure, part of the ribosomal stalk of the 50S ribosomal subunit. The N-terminus interacts with L11 and the large rRNA to form the base of the stalk. The C-terminus forms an elongated spine to which L12 dimers bind in a sequential fashion forming a multimeric L10(L12)X complex.

Forms part of the ribosomal stalk, playing a central role in the interaction of the ribosome with GTP-bound translation factors. The polypeptide is Large ribosomal subunit protein uL10 (Halorhodospira halophila (strain DSM 244 / SL1) (Ectothiorhodospira halophila (strain DSM 244 / SL1))).